An 812-amino-acid polypeptide reads, in one-letter code: G patch domain-containing protein 1 homolog (812 aa).

The tract at residues 1-42 (MNRKKLAAYGQEFEDDDEEGSSVSKKPTQIHEEIATDEKGKR) is disordered. Residues 29 to 40 (QIHEEIATDEKG) show a composition bias toward basic and acidic residues. In terms of domain architecture, G-patch spans 145–191 (SNSIGVRMLRSMGWREGRGIGLANVKQKQKRGGESSEAQFDREQASK). Disordered stretches follow at residues 384-416 (ANEV…FPDE) and 584-812 (NEIE…EEKK). A compositionally biased stretch (basic and acidic residues) spans 586–609 (IEMRERLLKSRAQRGAEEKKRNQS). 2 stretches are compositionally biased toward acidic residues: residues 610–630 (DDDD…ENEA) and 653–668 (DGAD…EEAE). Positions 669–720 (EKERQEILKKREEDLKRRREIVEKKEEENRKRVEKELKELENRDLLRVSKQQ) are enriched in basic and acidic residues. Basic residues predominate over residues 761-794 (MKKKKKDKKEKEKKKKSKKSKKSKKEKKTKRKHS). The segment covering 800 to 812 (DSGDNSDGWEEKK) has biased composition (acidic residues).

This sequence belongs to the GPATCH1 family.

This Caenorhabditis elegans protein is G patch domain-containing protein 1 homolog.